We begin with the raw amino-acid sequence, 447 residues long: Trimethylamine monooxygenase (447 aa).

Serine 13, glutamate 38, glutamine 40, leucine 46, tryptophan 47, and histidine 63 together coordinate FAD. 2 residues coordinate NADP(+): tryptophan 71 and asparagine 73. FAD-binding residues include asparagine 73 and valine 126. NADP(+)-binding residues include tyrosine 173, alanine 205, serine 206, serine 208, and arginine 229. FAD is bound by residues glutamine 318 and threonine 321. Arginine 413 contributes to the NADP(+) binding site.

The protein belongs to the FMO family. Requires FAD as cofactor.

The enzyme catalyses trimethylamine + NADPH + O2 = trimethylamine N-oxide + NADP(+) + H2O. Catalyzes the oxidation of trimethylamine (TMA) to produce trimethylamine N-oxide (TMAO). TMA is the best substrate, but the enzyme can also oxidize methimazole, indole and dimethylamine (DMA). This Roseovarius nubinhibens (strain ATCC BAA-591 / DSM 15170 / ISM) protein is Trimethylamine monooxygenase.